Reading from the N-terminus, the 397-residue chain is Elongation factor Tu (397 aa).

The tr-type G domain maps to 10–206; the sequence is KPHVNIGTIG…AVDENVPDPE (197 aa). The G1 stretch occupies residues 19–26; it reads GHVDHGKT. Position 19 to 26 (19 to 26) interacts with GTP; the sequence is GHVDHGKT. T26 serves as a coordination point for Mg(2+). The G2 stretch occupies residues 62 to 66; it reads GITIQ. Residues 83 to 86 form a G3 region; that stretch reads DAPG. GTP is bound by residues 83–87 and 138–141; these read DAPGH and NKAD. The segment at 138–141 is G4; it reads NKAD. The tract at residues 176–178 is G5; it reads SAL.

It belongs to the TRAFAC class translation factor GTPase superfamily. Classic translation factor GTPase family. EF-Tu/EF-1A subfamily. As to quaternary structure, monomer.

The protein localises to the cytoplasm. It catalyses the reaction GTP + H2O = GDP + phosphate + H(+). Its function is as follows. GTP hydrolase that promotes the GTP-dependent binding of aminoacyl-tRNA to the A-site of ribosomes during protein biosynthesis. This is Elongation factor Tu from Saccharopolyspora erythraea (strain ATCC 11635 / DSM 40517 / JCM 4748 / NBRC 13426 / NCIMB 8594 / NRRL 2338).